A 24-amino-acid chain; its full sequence is uncharacterized protein (24 aa).

This is an uncharacterized protein from Schizosaccharomyces pombe (strain 972 / ATCC 24843) (Fission yeast).